The primary structure comprises 887 residues: Bifunctional uridylyltransferase/uridylyl-removing enzyme (887 aa).

The segment at 1–337 (MINTSPLLNY…RLPNYERKIE (337 aa)) is uridylyltransferase. The interval 339 to 699 (VNDHFKIVDN…AHRKAAQDAV (361 aa)) is uridylyl-removing. One can recognise an HD domain in the interval 457 to 579 (VDAHTLLLLR…LGDMEHLDYL (123 aa)). 2 ACT domains span residues 700-782 (QIFI…LMQR) and 809-887 (MVEI…ICQH).

This sequence belongs to the GlnD family. Mg(2+) serves as cofactor.

The catalysed reaction is [protein-PII]-L-tyrosine + UTP = [protein-PII]-uridylyl-L-tyrosine + diphosphate. It catalyses the reaction [protein-PII]-uridylyl-L-tyrosine + H2O = [protein-PII]-L-tyrosine + UMP + H(+). Uridylyltransferase (UTase) activity is inhibited by glutamine, while glutamine activates uridylyl-removing (UR) activity. Its function is as follows. Modifies, by uridylylation and deuridylylation, the PII regulatory proteins (GlnB and homologs), in response to the nitrogen status of the cell that GlnD senses through the glutamine level. Under low glutamine levels, catalyzes the conversion of the PII proteins and UTP to PII-UMP and PPi, while under higher glutamine levels, GlnD hydrolyzes PII-UMP to PII and UMP (deuridylylation). Thus, controls uridylylation state and activity of the PII proteins, and plays an important role in the regulation of nitrogen assimilation and metabolism. In Acinetobacter baumannii (strain ATCC 17978 / DSM 105126 / CIP 53.77 / LMG 1025 / NCDC KC755 / 5377), this protein is Bifunctional uridylyltransferase/uridylyl-removing enzyme.